We begin with the raw amino-acid sequence, 1487 residues long: Probable lysine-specific demethylase SE14 (1487 aa).

The interval 1 to 23 (MPPQPPPAASASASAPDPAVPAW) is disordered. Low complexity predominate over residues 9–22 (ASASASAPDPAVPA). The JmjN domain occupies 30–71 (APEYRPTESEFADPIAFLSRVEREAAAYGICKVIPPHPRPSR). A compositionally biased stretch (low complexity) spans 86-104 (CDAPAPSPAAASDSSIPPS). Residues 86–113 (CDAPAPSPAAASDSSIPPSSSSPPPVSA) are disordered. The JmjC domain maps to 232–398 (NSPWNLQAIA…FAKEAAVRRA (167 aa)). Fe cation is bound by residues His275, Glu277, and His366. Disordered regions lie at residues 494 to 555 (SCSK…DDGD) and 684 to 718 (YGDT…PDVE). Composition is skewed to basic and acidic residues over residues 498–507 (APEKKGEDGP) and 542–551 (QAPEGEKLDT). The segment at 1377–1400 (FQCDIEFCDMTFETKAELRAHQRN) adopts a C2H2-type 1; degenerate zinc-finger fold. 3 C2H2-type zinc fingers span residues 1400 to 1424 (NICT…QCVH), 1430 to 1454 (FKCP…IRVH), and 1460 to 1486 (YKCS…KFNH).

Fe(2+) is required as a cofactor.

Its subcellular location is the nucleus. Its function is as follows. Histone demethylase that demethylates 'Lys-4' (H3K4me) of histone H3. Involved in the control of flowering time. Has a suppressive effect on floral transition under long day conditions through the demethylation of H3K4me3 in the promoter region of the flower-promoting signal HD3B/RFT1. This chain is Probable lysine-specific demethylase SE14 (SE14), found in Oryza sativa subsp. japonica (Rice).